Here is a 484-residue protein sequence, read N- to C-terminus: Monocarboxylate transporter 2 (484 aa).

The Cytoplasmic portion of the chain corresponds to 1–16 (MPSEPSAPLPQPLPPD). Residues 17–37 (GGWGWVVVCASFISIGFSYAF) traverse the membrane as a helical segment. The Extracellular segment spans residues 38–60 (PKAVTVFFKDIQEIFNTTSSQIA). A helical membrane pass occupies residues 61–81 (WISSIMLAVMYAGGPISSVLV). Residues 82-90 (NNYGSRPVV) lie on the Cytoplasmic side of the membrane. A helical membrane pass occupies residues 91-111 (IVGGLLCCIGMILASYSNSVI). Residues 112-116 (ELYLT) lie on the Extracellular side of the membrane. The chain crosses the membrane as a helical span at residues 117–137 (VGFIGGLGLAFNLQPALTIIG). Residues 138-149 (KYFYRRRPLANG) are Cytoplasmic-facing. The helical transmembrane segment at 150–170 (CAMAGSPVFLSTLAPFNQYLF) threads the bilayer. At 171–174 (NNYG) the chain is on the extracellular side. The chain crosses the membrane as a helical span at residues 175 to 195 (WKGSFLILGGIFLHSCVAGCL). Over 196–245 (MRPVGPSPNTKKSKSKVGSRHDSTLKKASKVSTAQKVNRFLDFSLFMHRG) the chain is Cytoplasmic. Residues 246 to 266 (FLIYLSGNVILFLGIFAPIIF) traverse the membrane as a helical segment. At 267–281 (LAQYAKHIGVDDYNS) the chain is on the extracellular side. Residues 282–302 (AFLLSVMAFIDMFARPSVGLI) form a helical membrane-spanning segment. The Cytoplasmic segment spans residues 303–311 (ANTSLIRPR). A helical transmembrane segment spans residues 312-332 (IQYLFSSAIIFTGICHLLCPL). Residues 333-337 (ATTYS) lie on the Extracellular side of the membrane. The helical transmembrane segment at 338-358 (ALVVYVVFFGLGFGSISSLLF) threads the bilayer. At 359–372 (ECLMDIVGATRFSS) the chain is on the cytoplasmic side. A helical transmembrane segment spans residues 373 to 393 (AVGLTTIVECCPVLFGPPLAG). Over 394 to 405 (KLLDITGEYKYL) the chain is Extracellular. The helical transmembrane segment at 406–426 (YIASGTVVLVSGTYLLIGNAI) threads the bilayer. Residues 427-484 (NYRLLDKERKREKAKKKKSASHASREMEALNRSKQDEVTVKASNAHNPPSDRDKESNI) lie on the Cytoplasmic side of the membrane. Residues 438–484 (EKAKKKKSASHASREMEALNRSKQDEVTVKASNAHNPPSDRDKESNI) are disordered. Basic and acidic residues-rich tracts occupy residues 449-465 (ASRE…DEVT) and 475-484 (PSDRDKESNI).

This sequence belongs to the major facilitator superfamily. Monocarboxylate porter (TC 2.A.1.13) family. In terms of assembly, homodimer. Interacts with GRID2IP. Interacts with EMB; interaction mediates SLC16A7 targeting to the plasma membrane. Interacts with isoform 2 of BSG. Detected in testis and in spermatozoa (at protein level).

It localises to the cell membrane. The protein localises to the cytoplasm. It is found in the basolateral cell membrane. The enzyme catalyses (S)-lactate(in) + H(+)(in) = (S)-lactate(out) + H(+)(out). The catalysed reaction is 3-methyl-2-oxobutanoate(out) + H(+)(out) = 3-methyl-2-oxobutanoate(in) + H(+)(in). It carries out the reaction acetoacetate(out) + H(+)(out) = acetoacetate(in) + H(+)(in). It catalyses the reaction (R)-3-hydroxybutanoate(out) + H(+)(out) = (R)-3-hydroxybutanoate(in) + H(+)(in). The enzyme catalyses 4-methyl-2-oxopentanoate(out) + H(+)(out) = 4-methyl-2-oxopentanoate(in) + H(+)(in). The catalysed reaction is pyruvate(out) + H(+)(out) = pyruvate(in) + H(+)(in). It carries out the reaction (S)-3-hydroxybutanoate(out) + H(+)(out) = (S)-3-hydroxybutanoate(in) + H(+)(in). With respect to regulation, transport activity exhibits steep dependence on substrate concentration. Substrate concentration sensitivity of SLC16A7 arises from the strong inter-subunit cooperativity of the SLC16A7 dimer during transport. Inhibited by AR-C155858. Its function is as follows. Proton-coupled monocarboxylate symporter. Catalyzes the rapid transport across the plasma membrane of monocarboxylates such as L-lactate, pyruvate and ketone bodies, acetoacetate, beta-hydroxybutyrate and acetate. Dimerization is functionally required and both subunits work cooperatively in transporting substrate. The protein is Monocarboxylate transporter 2 (Slc16a7) of Mus musculus (Mouse).